A 976-amino-acid polypeptide reads, in one-letter code: Ephrin type-A receptor 2 (976 aa).

Positions 1–23 (MELQAARACFALLWGCALAAAAA) are cleaved as a signal peptide. The segment at 1-206 (MELQAARACF…YYKKCPELLQ (206 aa)) is mediates interaction with CLDN4. The Extracellular portion of the chain corresponds to 24-537 (AQGKEVVLLD…SPEGSGNLAV (514 aa)). Positions 28-206 (EVVLLDFAAA…YYKKCPELLQ (179 aa)) constitute an Eph LBD domain. Cystine bridges form between Cys70–Cys188 and Cys105–Cys115. One can recognise a Fibronectin type-III 1 domain in the interval 328-432 (PPSAPHYLTA…TSRSFRTASV (105 aa)). Residues Asn407 and Asn435 are each glycosylated (N-linked (GlcNAc...) asparagine). The 92-residue stretch at 438 to 529 (EPPKVRLEGR…KVHEFQTLSP (92 aa)) folds into the Fibronectin type-III 2 domain. Residues 538-558 (IGGVAVGVVLLLVLAGVGFFI) traverse the membrane as a helical segment. Over 559 to 976 (HRRRKNQRAR…DQVNTVGIPI (418 aa)) the chain is Cytoplasmic. Ser570 bears the Phosphoserine mark. At Tyr575 the chain carries Phosphotyrosine. Residue Ser579 is modified to Phosphoserine. Phosphotyrosine; by autocatalysis is present on Tyr588. Tyr594 carries the post-translational modification Phosphotyrosine. The mediates interaction with ARHGEF16 and ELMO2 stretch occupies residues 606-906 (TEIHPSCVTR…STSGSEGVPF (301 aa)). Residues 613 to 875 (VTRQKVIGAG…DIVSILDKLI (263 aa)) form the Protein kinase domain. Position 619–627 (619–627 (IGAGEFGEV)) interacts with ATP. A Phosphotyrosine modification is found at Tyr628. Lys646 contacts ATP. Thr647 is subject to Phosphothreonine. Tyr735 is subject to Phosphotyrosine; by autocatalysis. The Proton acceptor role is filled by Asp739. The residue at position 772 (Tyr772) is a Phosphotyrosine. A phosphoserine mark is found at Ser869 and Ser892. Residues 886–976 (DFDPRVSIRL…DQVNTVGIPI (91 aa)) form a negatively regulates interaction with ARHGEF16 region. Ser897 carries the phosphoserine; by PKB/AKT1, RPS6KA1, RPS6KA3 AND PKA modification. Ser901 is subject to Phosphoserine. The region spanning 904-968 (VPFRTVSEWL…AYSLLGLKDQ (65 aa)) is the SAM domain. Tyr921 bears the Phosphotyrosine; by autocatalysis mark. Tyr930 bears the Phosphotyrosine mark. A PDZ-binding motif is present at residues 974 to 976 (IPI).

The protein belongs to the protein kinase superfamily. Tyr protein kinase family. Ephrin receptor subfamily. Homodimer. Interacts with SLA. Interacts (phosphorylated form) with VAV2, VAV3 and PI3-kinase p85 subunit (PIK3R1, PIK3R2 or PIK3R3); critical for the EFNA1-induced activation of RAC1 which stimulates cell migration. Interacts with INPPL1; regulates activated EPHA2 endocytosis and degradation. Interacts (inactivated form) with PTK2/FAK1 and interacts (EFNA1 ligand-activated form) with PTPN11; regulates integrin-mediated adhesion. Interacts with ARHGEF16, DOCK4 and ELMO2; mediates ligand-independent activation of RAC1 which stimulates cell migration. Interacts with CLDN4; phosphorylates CLDN4 and may regulate tight junctions. Interacts with ACP1. Interacts (via SAM domain) with ANKS1A (via SAM domain). Interacts with CEMIP. Interacts with NCK1; may regulate EPHA2 activity in cell migration and adhesion. Interacts with TIMD4. As to quaternary structure, (Microbial infection) Interacts with human herpes virus 8/HHV-8 glycoprotein L/gL and glycoprotein H/gH heterodimer; this interaction triggers EPHA2 phosphorylation and endocytosis, allowing virus entry. In terms of assembly, (Microbial infection) Interacts with human cytomegalovirus (HCMV) glycoprotein L/gL and glycoprotein H/gH heterodimer. (Microbial infection) Interacts with Epstein-Barr virus/HHV-4 glycoprotein L/gL and glycoprotein H/gH heterodimer; this interaction facilitates virus internalization and fusion. In terms of processing, autophosphorylates. Phosphorylated on tyrosine upon binding and activation by EFNA1. Phosphorylated residues Tyr-588 and Tyr-594 are required for binding VAV2 and VAV3 while phosphorylated residues Tyr-735 and Tyr-930 are required for binding PI3-kinase p85 subunit (PIK3R1, PIK3R2 or PIK3R3). These phosphorylated residues are critical for recruitment of VAV2 and VAV3 and PI3-kinase p85 subunit which transduce downstream signaling to activate RAC1 GTPase and cell migration. Dephosphorylation of Tyr-930 by PTPRF prevents the interaction of EPHA2 with NCK1. Phosphorylated at Ser-897 by PKB; serum-induced phosphorylation which targets EPHA2 to the cell leading edge and stimulates cell migration. Phosphorylation by PKB is inhibited by EFNA1-activated EPHA2 which regulates PKB activity via a reciprocal regulatory loop. Phosphorylated at Ser-897 in response to TNF by RPS6KA1 and RPS6KA3; RPS6KA-EPHA2 signaling pathway controls cell migration. Phosphorylated at Ser-897 by PKA; blocks cell retraction induced by EPHA2 kinase activity. Dephosphorylated by ACP1. Post-translationally, ubiquitinated by CHIP/STUB1. Ubiquitination is regulated by the HSP90 chaperone and regulates the receptor stability and activity through proteasomal degradation. ANKS1A prevents ubiquitination and degradation. As to expression, expressed in brain and glioma tissue and glioma cell lines (at protein level). Expressed most highly in tissues that contain a high proportion of epithelial cells, e.g. skin, intestine, lung, and ovary.

The protein localises to the cell membrane. Its subcellular location is the cell projection. It is found in the ruffle membrane. The protein resides in the lamellipodium membrane. It localises to the cell junction. The protein localises to the focal adhesion. It carries out the reaction L-tyrosyl-[protein] + ATP = O-phospho-L-tyrosyl-[protein] + ADP + H(+). Receptor tyrosine kinase which binds promiscuously membrane-bound ephrin-A family ligands residing on adjacent cells, leading to contact-dependent bidirectional signaling into neighboring cells. The signaling pathway downstream of the receptor is referred to as forward signaling while the signaling pathway downstream of the ephrin ligand is referred to as reverse signaling. Activated by the ligand ephrin-A1/EFNA1 regulates migration, integrin-mediated adhesion, proliferation and differentiation of cells. Regulates cell adhesion and differentiation through DSG1/desmoglein-1 and inhibition of the ERK1/ERK2 (MAPK3/MAPK1, respectively) signaling pathway. May also participate in UV radiation-induced apoptosis and have a ligand-independent stimulatory effect on chemotactic cell migration. During development, may function in distinctive aspects of pattern formation and subsequently in development of several fetal tissues. Involved for instance in angiogenesis, in early hindbrain development and epithelial proliferation and branching morphogenesis during mammary gland development. Engaged by the ligand ephrin-A5/EFNA5 may regulate lens fiber cells shape and interactions and be important for lens transparency development and maintenance. With ephrin-A2/EFNA2 may play a role in bone remodeling through regulation of osteoclastogenesis and osteoblastogenesis. In terms of biological role, (Microbial infection) Acts as a receptor for hepatitis C virus (HCV) in hepatocytes and facilitates its cell entry. Mediates HCV entry by promoting the formation of the CD81-CLDN1 receptor complexes that are essential for HCV entry and by enhancing membrane fusion of cells expressing HCV envelope glycoproteins. Its function is as follows. Acts as a receptor for human cytomegalovirus (HCMV) to mediate viral entry and fusion in glioblastoma cells. This Homo sapiens (Human) protein is Ephrin type-A receptor 2 (EPHA2).